The following is an 876-amino-acid chain: Alanine--tRNA ligase (876 aa).

4 residues coordinate Zn(2+): histidine 564, histidine 568, cysteine 666, and histidine 670.

The protein belongs to the class-II aminoacyl-tRNA synthetase family. Zn(2+) is required as a cofactor.

Its subcellular location is the cytoplasm. The enzyme catalyses tRNA(Ala) + L-alanine + ATP = L-alanyl-tRNA(Ala) + AMP + diphosphate. Catalyzes the attachment of alanine to tRNA(Ala) in a two-step reaction: alanine is first activated by ATP to form Ala-AMP and then transferred to the acceptor end of tRNA(Ala). Also edits incorrectly charged Ser-tRNA(Ala) and Gly-tRNA(Ala) via its editing domain. In Colwellia psychrerythraea (strain 34H / ATCC BAA-681) (Vibrio psychroerythus), this protein is Alanine--tRNA ligase.